The chain runs to 85 residues: Sec-independent protein translocase protein TatA (85 aa).

Residues Met-1 to Ala-21 form a helical membrane-spanning segment. A disordered region spans residues Val-43–Arg-85. 2 stretches are compositionally biased toward basic and acidic residues: residues Lys-44 to Ser-58 and Val-69 to Arg-85.

It belongs to the TatA/E family. In terms of assembly, the Tat system comprises two distinct complexes: a TatABC complex, containing multiple copies of TatA, TatB and TatC subunits, and a separate TatA complex, containing only TatA subunits. Substrates initially bind to the TatABC complex, which probably triggers association of the separate TatA complex to form the active translocon.

It is found in the cell membrane. Its function is as follows. Part of the twin-arginine translocation (Tat) system that transports large folded proteins containing a characteristic twin-arginine motif in their signal peptide across membranes. TatA could form the protein-conducting channel of the Tat system. This chain is Sec-independent protein translocase protein TatA, found in Micrococcus luteus (strain ATCC 4698 / DSM 20030 / JCM 1464 / CCM 169 / CCUG 5858 / IAM 1056 / NBRC 3333 / NCIMB 9278 / NCTC 2665 / VKM Ac-2230) (Micrococcus lysodeikticus).